We begin with the raw amino-acid sequence, 400 residues long: MPFVKDFKPQALGDTNLFKPIKIGNNELLHRAVIPPLTRMRAQHPGNIPNRDWAVEYYAQRAQRPGTLIITEGTFPSPQSGGYDNAPGIWSEEQIKEWTKIFKAIHENKSFAWVQLWVLGWAAFPDTLARDGLRYDSASDNVYMNAEQEEKAKKANNPQHSITKDEIKQYVKEYVQAAKNSIAAGADGVEIHSANGYLLNQFLDPHSNNRTDEYGGSIENRARFTLEVVDAVVDAIGPEKVGLRLSPYGVFNSMSGGAETGIVAQYAYVLGELERRAKAGKRLAFVHLVEPRVTNPFLTEGEGEYNGGSNKFAYSIWKGPIIRAGNFALHPEVVREEVKDPRTLIGYGRFFISNPDLVDRLEKGLPLNKYDRDTFYKMSAEGYIDYPTYEEALKLGWDKN.

Residues Thr-38 and Gln-115 each coordinate FMN. Substrate is bound by residues His-192 and Asn-195. Tyr-197 (proton donor) is an active-site residue. 2 residues coordinate FMN: Arg-244 and Arg-349. A Phosphoserine modification is found at Ser-353. Tyr-376 serves as a coordination point for substrate. Position 379 is a phosphoserine (Ser-379).

This sequence belongs to the NADH:flavin oxidoreductase/NADH oxidase family. In terms of assembly, homodimer or heterodimer with OYE3. It depends on FMN as a cofactor.

The protein localises to the cytoplasm. Its subcellular location is the nucleus. The protein resides in the mitochondrion. It catalyses the reaction A + NADPH + H(+) = AH2 + NADP(+). Flavin-dependent enoate reductase that catalyzes the chemo- and stereoslective hydrogenation of electron-poor alkenes. The enzyme is reduced by NADPH, and oxygen, quinones, and alpha,beta-unsaturated aldehydes and ketones can act as electron acceptors to complete catalytic turnover. The physiological oxidant remains elusive. Has an antioxidant activity, reducing reactive oxygen species (ROS) levels when overexpressed. Formation of OYE2-OYE3 heterodimers contribute to the induction of programmed cell death upon oxidative stress. The protein is NADPH dehydrogenase 2 of Saccharomyces cerevisiae (strain ATCC 204508 / S288c) (Baker's yeast).